Here is a 315-residue protein sequence, read N- to C-terminus: Homoserine kinase (315 aa).

Residue 96–106 (PHSRGLGSSAA) participates in ATP binding.

This sequence belongs to the GHMP kinase family. Homoserine kinase subfamily.

It is found in the cytoplasm. It catalyses the reaction L-homoserine + ATP = O-phospho-L-homoserine + ADP + H(+). Its pathway is amino-acid biosynthesis; L-threonine biosynthesis; L-threonine from L-aspartate: step 4/5. Functionally, catalyzes the ATP-dependent phosphorylation of L-homoserine to L-homoserine phosphate. This chain is Homoserine kinase, found in Mycobacterium leprae (strain Br4923).